The primary structure comprises 350 residues: Uroporphyrinogen decarboxylase (350 aa).

Substrate-binding positions include 28-32 (RQAGR), Phe-47, Asp-78, Tyr-155, Ser-210, and His-325.

It belongs to the uroporphyrinogen decarboxylase family. In terms of assembly, homodimer.

It is found in the cytoplasm. The catalysed reaction is uroporphyrinogen III + 4 H(+) = coproporphyrinogen III + 4 CO2. The protein operates within porphyrin-containing compound metabolism; protoporphyrin-IX biosynthesis; coproporphyrinogen-III from 5-aminolevulinate: step 4/4. Catalyzes the decarboxylation of four acetate groups of uroporphyrinogen-III to yield coproporphyrinogen-III. This Nostoc sp. (strain PCC 7120 / SAG 25.82 / UTEX 2576) protein is Uroporphyrinogen decarboxylase.